Consider the following 254-residue polypeptide: TLC domain-containing protein At5g14285 (254 aa).

Transmembrane regions (helical) follow at residues 12–32, 45–65, 82–101, 124–144, 172–192, and 211–231; these read DLPI…FIVF, SCLI…RAVF, TVLD…YIVF, FLVF…EVTS, LSPP…PLFF, and WLWI…ILWI. The region spanning 38–248 is the TLC domain; the sequence is QIRPEASSCL…FSERKANKIR (211 aa).

Its subcellular location is the membrane. This Arabidopsis thaliana (Mouse-ear cress) protein is TLC domain-containing protein At5g14285.